A 22-amino-acid chain; its full sequence is Heat shock 70-related protein 1, mitochondrial (22 aa).

This sequence belongs to the heat shock protein 70 family.

The protein resides in the mitochondrion. The polypeptide is Heat shock 70-related protein 1, mitochondrial (Leishmania tarentolae (Sauroleishmania tarentolae)).